Consider the following 256-residue polypeptide: Homeobox-leucine zipper protein HOX28 (256 aa).

The disordered stretch occupies residues 56-86 (ACSPGSPVSSGSGKRGSGSGSGDEVDDAGCD). Positions 58-67 (SPGSPVSSGS) are enriched in low complexity. Residues 91 to 150 (GARKKLRLSKDQAAVLEECFKTHHTLTPKQKVALAKSLNLRPRQVEVWFQNRRARTKLKQ) constitute a DNA-binding region (homeobox). The leucine-zipper stretch occupies residues 149–193 (KQTEVDCEHLKRWCDQLADDNRRLHKELAELRALKATPTPPAAAP).

It belongs to the HD-ZIP homeobox family. Class II subfamily. As to expression, expressed in seedlings, roots, stems and panicles.

Its subcellular location is the nucleus. In terms of biological role, probable transcription factor. The chain is Homeobox-leucine zipper protein HOX28 (HOX28) from Oryza sativa subsp. indica (Rice).